We begin with the raw amino-acid sequence, 77 residues long: VpAmp2.0 (77 aa).

Residues 1–23 (MQLRKALLVIFVAYLLVTDEAEA) form the signal peptide. The propeptide occupies 49–77 (RKREIEDLFDPYQKDLDLQRLDRFFSQFQ).

It belongs to the non-disulfide-bridged peptide (NDBP) superfamily. Medium-length antimicrobial peptide (group 3) family. Expressed by the venom gland.

The protein resides in the secreted. Its subcellular location is the target cell membrane. Its function is as follows. Antimicrobial peptide with potent activity against Gram-positive bacteria S.aureus (MIC=10 uM) and S.agalactiaea (MIC=15 uM), and Gram-negative bacteria E.coli (MIC=24 uM) and P.aeruginosa (MIC=15 uM), as well as against yeasts Candida albicans (MIC=3.1 uM) and C.glabrata (MIC=25 uM). Also elicits low hemolysis on human erythrocytes (HC(50)=167 uM). The sequence is that of VpAmp2.0 from Mesomexovis punctatus (Scorpion).